Consider the following 390-residue polypeptide: NADH-quinone oxidoreductase subunit D (390 aa).

It belongs to the complex I 49 kDa subunit family. As to quaternary structure, NDH-1 is composed of 14 different subunits. Subunits NuoB, C, D, E, F, and G constitute the peripheral sector of the complex.

Its subcellular location is the cell membrane. It catalyses the reaction a quinone + NADH + 5 H(+)(in) = a quinol + NAD(+) + 4 H(+)(out). Functionally, NDH-1 shuttles electrons from NADH, via FMN and iron-sulfur (Fe-S) centers, to quinones in the respiratory chain. The immediate electron acceptor for the enzyme in this species is believed to be ubiquinone. Couples the redox reaction to proton translocation (for every two electrons transferred, four hydrogen ions are translocated across the cytoplasmic membrane), and thus conserves the redox energy in a proton gradient. The chain is NADH-quinone oxidoreductase subunit D from Wolbachia sp. subsp. Brugia malayi (strain TRS).